Here is a 155-residue protein sequence, read N- to C-terminus: 3-hydroxyacyl-[acyl-carrier-protein] dehydratase FabZ (155 aa).

The active site involves histidine 57.

It belongs to the thioester dehydratase family. FabZ subfamily.

The protein resides in the cytoplasm. The catalysed reaction is a (3R)-hydroxyacyl-[ACP] = a (2E)-enoyl-[ACP] + H2O. Functionally, involved in unsaturated fatty acids biosynthesis. Catalyzes the dehydration of short chain beta-hydroxyacyl-ACPs and long chain saturated and unsaturated beta-hydroxyacyl-ACPs. The protein is 3-hydroxyacyl-[acyl-carrier-protein] dehydratase FabZ of Sorangium cellulosum (strain So ce56) (Polyangium cellulosum (strain So ce56)).